We begin with the raw amino-acid sequence, 393 residues long: Bifunctional enzyme Fae/Hps (393 aa).

Positions 1–161 (MYLVGEALIG…YEKDRAAHGI (161 aa)) are formaldehyde-activating enzyme. Residue histidine 17 is the Proton donor of the active site. The substrate site is built by aspartate 19, leucine 48, lysine 66, threonine 68, and glutamine 83. The 3-hexulose-6-phosphate synthase stretch occupies residues 162 to 393 (MGFKVQRLWD…IDQFRIMTDF (232 aa)).

In the N-terminal section; belongs to the formaldehyde-activating enzyme family. The protein in the C-terminal section; belongs to the HPS/KGPDC family. HPS subfamily.

The enzyme catalyses 5,6,7,8-tetrahydromethanopterin + formaldehyde = 5,10-methylenetetrahydromethanopterin + H2O. It carries out the reaction D-ribulose 5-phosphate + formaldehyde = D-arabino-hex-3-ulose 6-phosphate. The protein operates within carbohydrate biosynthesis; D-ribose 5-phosphate biosynthesis. Functionally, catalyzes the condensation of formaldehyde with tetrahydromethanopterin (H(4)MPT) to 5,10-methylenetetrahydromethanopterin. Catalyzes the reversible formation of ribulose-5-phosphate and formaldehyde from 3-hexulose-6-phosphate. This Methanoregula boonei (strain DSM 21154 / JCM 14090 / 6A8) protein is Bifunctional enzyme Fae/Hps.